The sequence spans 369 residues: Nuclear pore complex-interacting protein family member A7 (369 aa).

Residues 151–171 (SMKEREHREEERQVSEAEENG) are disordered.

The protein belongs to the NPIP family.

The protein is Nuclear pore complex-interacting protein family member A7 (NPIPA7) of Homo sapiens (Human).